Reading from the N-terminus, the 150-residue chain is Endoribonuclease YbeY (150 aa).

Zn(2+) is bound by residues histidine 102, histidine 106, and histidine 112.

It belongs to the endoribonuclease YbeY family. Zn(2+) is required as a cofactor.

It localises to the cytoplasm. In terms of biological role, single strand-specific metallo-endoribonuclease involved in late-stage 70S ribosome quality control and in maturation of the 3' terminus of the 16S rRNA. The chain is Endoribonuclease YbeY from Thermotoga maritima (strain ATCC 43589 / DSM 3109 / JCM 10099 / NBRC 100826 / MSB8).